The following is a 331-amino-acid chain: Glycerol-3-phosphate dehydrogenase [NAD(P)+] (331 aa).

Residues Trp-11, Arg-30, and Lys-105 each coordinate NADPH. 3 residues coordinate sn-glycerol 3-phosphate: Lys-105, Gly-134, and Ser-136. Ala-138 is an NADPH binding site. Sn-glycerol 3-phosphate contacts are provided by Lys-189, Asp-242, Ser-252, Arg-253, and Asn-254. Catalysis depends on Lys-189, which acts as the Proton acceptor. Residue Arg-253 coordinates NADPH. NADPH-binding residues include Val-277 and Glu-279.

This sequence belongs to the NAD-dependent glycerol-3-phosphate dehydrogenase family.

The protein resides in the cytoplasm. It catalyses the reaction sn-glycerol 3-phosphate + NAD(+) = dihydroxyacetone phosphate + NADH + H(+). The catalysed reaction is sn-glycerol 3-phosphate + NADP(+) = dihydroxyacetone phosphate + NADPH + H(+). It functions in the pathway membrane lipid metabolism; glycerophospholipid metabolism. In terms of biological role, catalyzes the reduction of the glycolytic intermediate dihydroxyacetone phosphate (DHAP) to sn-glycerol 3-phosphate (G3P), the key precursor for phospholipid synthesis. The protein is Glycerol-3-phosphate dehydrogenase [NAD(P)+] of Janthinobacterium sp. (strain Marseille) (Minibacterium massiliensis).